A 424-amino-acid polypeptide reads, in one-letter code: Histidine--tRNA ligase (424 aa).

Belongs to the class-II aminoacyl-tRNA synthetase family. As to quaternary structure, homodimer.

The protein resides in the cytoplasm. The enzyme catalyses tRNA(His) + L-histidine + ATP = L-histidyl-tRNA(His) + AMP + diphosphate + H(+). This is Histidine--tRNA ligase from Staphylococcus epidermidis (strain ATCC 12228 / FDA PCI 1200).